A 290-amino-acid chain; its full sequence is Nucleoid occlusion protein (290 aa).

Positions 153–172 (EALAQRLGKGQSTIANKLRL) form a DNA-binding region, H-T-H motif.

It belongs to the ParB family.

Its subcellular location is the cytoplasm. It is found in the nucleoid. Its function is as follows. Effects nucleoid occlusion by binding relatively nonspecifically to DNA and preventing the assembly of the division machinery in the vicinity of the nucleoid, especially under conditions that disturb the cell cycle. It helps to coordinate cell division and chromosome segregation by preventing the formation of the Z ring through the nucleoid, which would cause chromosome breakage. In Bacillus cereus (strain G9842), this protein is Nucleoid occlusion protein.